A 281-amino-acid polypeptide reads, in one-letter code: Large ribosomal subunit protein uL2 (281 aa).

Disordered regions lie at residues 1–23 (MAVK…DYSK) and 224–281 (RGSV…KDSK). Residues 12–23 (GRRNMSSLDYSK) are compositionally biased toward polar residues. The segment covering 261 to 281 (KTRKTKKSSTKLILRRRKDSK) has biased composition (basic residues).

Belongs to the universal ribosomal protein uL2 family. In terms of assembly, part of the 50S ribosomal subunit. Forms a bridge to the 30S subunit in the 70S ribosome.

In terms of biological role, one of the primary rRNA binding proteins. Required for association of the 30S and 50S subunits to form the 70S ribosome, for tRNA binding and peptide bond formation. It has been suggested to have peptidyltransferase activity; this is somewhat controversial. Makes several contacts with the 16S rRNA in the 70S ribosome. This is Large ribosomal subunit protein uL2 from Mycoplasmopsis agalactiae (strain NCTC 10123 / CIP 59.7 / PG2) (Mycoplasma agalactiae).